The sequence spans 378 residues: Chaperone protein DnaJ (378 aa).

A J domain is found at 6 to 70 (DYYDVLGVSR…QKRQQYDQFG (65 aa)). The segment at 137 to 219 (GKTSEISYSR…CHGKGVKTQK (83 aa)) adopts a CR-type zinc-finger fold. 8 residues coordinate Zn(2+): Cys150, Cys153, Cys167, Cys170, Cys193, Cys196, Cys207, and Cys210. CXXCXGXG motif repeat units follow at residues 150 to 157 (CEVCKGSG), 167 to 174 (CDKCGGSG), 193 to 200 (CDKCAGSG), and 207 to 214 (CHNCHGKG).

This sequence belongs to the DnaJ family. Homodimer. Zn(2+) is required as a cofactor.

It localises to the cytoplasm. Participates actively in the response to hyperosmotic and heat shock by preventing the aggregation of stress-denatured proteins and by disaggregating proteins, also in an autonomous, DnaK-independent fashion. Unfolded proteins bind initially to DnaJ; upon interaction with the DnaJ-bound protein, DnaK hydrolyzes its bound ATP, resulting in the formation of a stable complex. GrpE releases ADP from DnaK; ATP binding to DnaK triggers the release of the substrate protein, thus completing the reaction cycle. Several rounds of ATP-dependent interactions between DnaJ, DnaK and GrpE are required for fully efficient folding. Also involved, together with DnaK and GrpE, in the DNA replication of plasmids through activation of initiation proteins. This chain is Chaperone protein DnaJ, found in Lactobacillus delbrueckii subsp. bulgaricus (strain ATCC BAA-365 / Lb-18).